The following is a 282-amino-acid chain: Anamorsin homolog (282 aa).

The segment at 1–140 (MADLQGKAVL…KPVYEVGAAA (140 aa)) is N-terminal SAM-like domain. A linker region spans residues 141 to 192 (PLKLSFAKKKQSGAAAPAAQVAEVWTIATDDFDDDDLLENDGDELLDAEDLA). The [2Fe-2S] cluster site is built by Cys203, Cys214, Cys217, and Cys219. The tract at residues 203 to 219 (CEVGAGGKRRACKNCTC) is fe-S binding site A. Residues Cys243, Cys246, Cys254, and Cys257 each contribute to the [4Fe-4S] cluster site. 2 short sequence motifs (cx2C motif) span residues 243-246 (CGNC) and 254-257 (CASC). Residues 243–257 (CGNCYLGDAFRCASC) are fe-S binding site B.

This sequence belongs to the anamorsin family. In terms of assembly, monomer. [2Fe-2S] cluster is required as a cofactor. Requires [4Fe-4S] cluster as cofactor.

It is found in the cytoplasm. The protein resides in the mitochondrion intermembrane space. In terms of biological role, component of the cytosolic iron-sulfur (Fe-S) protein assembly (CIA) machinery. Required for the maturation of extramitochondrial Fe-S proteins. Part of an electron transfer chain functioning in an early step of cytosolic Fe-S biogenesis, facilitating the de novo assembly of a [4Fe-4S] cluster on the cytosolic Fe-S scaffold complex. Electrons are transferred from NADPH via a FAD- and FMN-containing diflavin oxidoreductase. Together with the diflavin oxidoreductase, also required for the assembly of the diferric tyrosyl radical cofactor of ribonucleotide reductase (RNR), probably by providing electrons for reduction during radical cofactor maturation in the catalytic small subunit. This chain is Anamorsin homolog, found in Monosiga brevicollis (Choanoflagellate).